A 233-amino-acid polypeptide reads, in one-letter code: Orotidine 5'-phosphate decarboxylase (233 aa).

Residues Asp13, Lys35, 62-71 (DLKFHDIPNT), Thr122, Arg182, Gln191, Gly211, and Arg212 contribute to the substrate site. Lys64 (proton donor) is an active-site residue.

This sequence belongs to the OMP decarboxylase family. Type 1 subfamily. In terms of assembly, homodimer.

The catalysed reaction is orotidine 5'-phosphate + H(+) = UMP + CO2. It participates in pyrimidine metabolism; UMP biosynthesis via de novo pathway; UMP from orotate: step 2/2. In terms of biological role, catalyzes the decarboxylation of orotidine 5'-monophosphate (OMP) to uridine 5'-monophosphate (UMP). This Pseudomonas putida (strain ATCC 47054 / DSM 6125 / CFBP 8728 / NCIMB 11950 / KT2440) protein is Orotidine 5'-phosphate decarboxylase.